We begin with the raw amino-acid sequence, 79 residues long: Large ribosomal subunit protein uL29 (79 aa).

It belongs to the universal ribosomal protein uL29 family.

The chain is Large ribosomal subunit protein uL29 from Tropheryma whipplei (strain Twist) (Whipple's bacillus).